We begin with the raw amino-acid sequence, 655 residues long: Fructose-1,6-bisphosphatase class 3 (655 aa).

The protein belongs to the FBPase class 3 family. Mn(2+) is required as a cofactor.

It catalyses the reaction beta-D-fructose 1,6-bisphosphate + H2O = beta-D-fructose 6-phosphate + phosphate. The protein operates within carbohydrate biosynthesis; gluconeogenesis. This chain is Fructose-1,6-bisphosphatase class 3, found in Porphyromonas gingivalis (strain ATCC 33277 / DSM 20709 / CIP 103683 / JCM 12257 / NCTC 11834 / 2561).